Reading from the N-terminus, the 350-residue chain is S-adenosylmethionine:tRNA ribosyltransferase-isomerase (350 aa).

The protein belongs to the QueA family. Monomer.

The protein resides in the cytoplasm. The catalysed reaction is 7-aminomethyl-7-carbaguanosine(34) in tRNA + S-adenosyl-L-methionine = epoxyqueuosine(34) in tRNA + adenine + L-methionine + 2 H(+). The protein operates within tRNA modification; tRNA-queuosine biosynthesis. Transfers and isomerizes the ribose moiety from AdoMet to the 7-aminomethyl group of 7-deazaguanine (preQ1-tRNA) to give epoxyqueuosine (oQ-tRNA). This chain is S-adenosylmethionine:tRNA ribosyltransferase-isomerase, found in Vibrio vulnificus (strain CMCP6).